Reading from the N-terminus, the 114-residue chain is Beta-microseminoprotein J1 (114 aa).

A signal peptide spans 1–20 (MNVLLGGLVIFATFVTLCNA). Cystine bridges form between Cys22–Cys70, Cys38–Cys62, Cys57–Cys93, Cys60–Cys69, and Cys84–Cys107.

It belongs to the beta-microseminoprotein family.

It is found in the secreted. In Saguinus oedipus (Cotton-top tamarin), this protein is Beta-microseminoprotein J1 (MSPJ).